The chain runs to 282 residues: Hydroxyethylthiazole kinase 2 (282 aa).

Substrate is bound at residue methionine 44. ATP contacts are provided by arginine 120 and serine 179. Glycine 206 is a substrate binding site.

The protein belongs to the Thz kinase family. The cofactor is Mg(2+).

It catalyses the reaction 5-(2-hydroxyethyl)-4-methylthiazole + ATP = 4-methyl-5-(2-phosphooxyethyl)-thiazole + ADP + H(+). It functions in the pathway cofactor biosynthesis; thiamine diphosphate biosynthesis; 4-methyl-5-(2-phosphoethyl)-thiazole from 5-(2-hydroxyethyl)-4-methylthiazole: step 1/1. In terms of biological role, catalyzes the phosphorylation of the hydroxyl group of 4-methyl-5-beta-hydroxyethylthiazole (THZ). The chain is Hydroxyethylthiazole kinase 2 from Methanosphaera stadtmanae (strain ATCC 43021 / DSM 3091 / JCM 11832 / MCB-3).